The primary structure comprises 242 residues: Biosynthetic peptidoglycan transglycosylase (242 aa).

The helical transmembrane segment at 19–39 (LMVVLAVFWGGGIALFSVAPV) threads the bilayer.

It belongs to the glycosyltransferase 51 family.

The protein resides in the cell inner membrane. It carries out the reaction [GlcNAc-(1-&gt;4)-Mur2Ac(oyl-L-Ala-gamma-D-Glu-L-Lys-D-Ala-D-Ala)](n)-di-trans,octa-cis-undecaprenyl diphosphate + beta-D-GlcNAc-(1-&gt;4)-Mur2Ac(oyl-L-Ala-gamma-D-Glu-L-Lys-D-Ala-D-Ala)-di-trans,octa-cis-undecaprenyl diphosphate = [GlcNAc-(1-&gt;4)-Mur2Ac(oyl-L-Ala-gamma-D-Glu-L-Lys-D-Ala-D-Ala)](n+1)-di-trans,octa-cis-undecaprenyl diphosphate + di-trans,octa-cis-undecaprenyl diphosphate + H(+). It functions in the pathway cell wall biogenesis; peptidoglycan biosynthesis. Functionally, peptidoglycan polymerase that catalyzes glycan chain elongation from lipid-linked precursors. The polypeptide is Biosynthetic peptidoglycan transglycosylase (Escherichia coli (strain 55989 / EAEC)).